The chain runs to 418 residues: Somatostatin receptor type 3 (418 aa).

The segment at 1 to 21 (MDMLHPSSVSTTSEPENASSA) is disordered. Topologically, residues 1 to 43 (MDMLHPSSVSTTSEPENASSAWPPDATLGNVSAGPSPAGLAVS) are extracellular. A compositionally biased stretch (polar residues) spans 7–20 (SSVSTTSEPENASS). Residues asparagine 17 and asparagine 30 are each glycosylated (N-linked (GlcNAc...) asparagine). The chain crosses the membrane as a helical span at residues 44–69 (GVLIPLVYLVVCVVGLLGNSLVIYVV). Residues 70 to 79 (LRHTASPSVT) lie on the Cytoplasmic side of the membrane. A helical membrane pass occupies residues 80–101 (NVYILNLALADELFMLGLPFLA). Residues 102–116 (AQNALSYWPFGSLMC) are Extracellular-facing. Residues cysteine 116 and cysteine 191 are joined by a disulfide bond. Residues 117–138 (RLVMAVDGINQFTSIFCLTVMS) traverse the membrane as a helical segment. Residues 139-161 (VDRYLAVVHPTRSARWRTAPVAR) lie on the Cytoplasmic side of the membrane. The helical transmembrane segment at 162–181 (TVSAAVWVASAVVVLPVVVF) threads the bilayer. At 182-205 (SGVPRGMSTCHMQWPEPAAAWRAG) the chain is on the extracellular side. The chain crosses the membrane as a helical span at residues 206-231 (FIIYTAALGFFGPLLVICLCYLLIVV). Residues 232–257 (KVRSAGRRVWAPSCQRRRRSERRVTR) lie on the Cytoplasmic side of the membrane. Residues 258 to 279 (MVVAVVALFVLCWMPFYVLNIV) form a helical membrane-spanning segment. Residues 280–293 (NVVCPLPEEPAFFG) lie on the Extracellular side of the membrane. The chain crosses the membrane as a helical span at residues 294–316 (LYFLVVALPYANSCANPILYGFL). Topologically, residues 317-418 (SYRFKQGFRR…KSSTMRISYL (102 aa)) are cytoplasmic. Phosphoserine occurs at positions 332 and 337. Residues 335–418 (VRSQEPTVGP…KSSTMRISYL (84 aa)) are disordered. The residue at position 348 (threonine 348) is a Phosphothreonine. The segment covering 348 to 360 (TEEEDEEEEDGEE) has biased composition (acidic residues). Over residues 361–371 (SREGGKGKEMN) the composition is skewed to basic and acidic residues. Composition is skewed to polar residues over residues 373–385 (RVSQITQPGTSGQ) and 395–418 (KEQQLLPQEASTGEKSSTMRISYL).

This sequence belongs to the G-protein coupled receptor 1 family. In terms of assembly, homodimer and heterodimer with SSTR2. Heterodimerization with SSTR2 inactivates SSTR3 receptor function. Phosphorylated. Phosphorylation increases upon somatostatin binding. In terms of tissue distribution, brain, pituitary and pancreas.

Its subcellular location is the cell membrane. Functionally, receptor for somatostatin-14 and -28. This receptor is coupled via pertussis toxin sensitive G proteins to inhibition of adenylyl cyclase. The protein is Somatostatin receptor type 3 (SSTR3) of Homo sapiens (Human).